We begin with the raw amino-acid sequence, 287 residues long: Fructose-bisphosphate aldolase (287 aa).

Position 50 (Ser-50) interacts with D-glyceraldehyde 3-phosphate. Catalysis depends on Asp-85, which acts as the Proton donor. The Zn(2+) site is built by His-86, Asp-107, Glu-137, and His-181. Gly-182 provides a ligand contact to dihydroxyacetone phosphate. His-209 contacts Zn(2+). Residues 210-212 and 231-234 each bind dihydroxyacetone phosphate; these read GGT and NVNT. Phosphothreonine occurs at positions 212 and 234.

Belongs to the class II fructose-bisphosphate aldolase family. It depends on Zn(2+) as a cofactor.

It catalyses the reaction beta-D-fructose 1,6-bisphosphate = D-glyceraldehyde 3-phosphate + dihydroxyacetone phosphate. Its pathway is carbohydrate degradation; glycolysis; D-glyceraldehyde 3-phosphate and glycerone phosphate from D-glucose: step 4/4. Functionally, catalyzes the aldol condensation of dihydroxyacetone phosphate (DHAP or glycerone-phosphate) with glyceraldehyde 3-phosphate (G3P) to form fructose 1,6-bisphosphate (FBP) in gluconeogenesis and the reverse reaction in glycolysis. This is Fructose-bisphosphate aldolase (fba) from Geobacillus stearothermophilus (Bacillus stearothermophilus).